The following is a 352-amino-acid chain: Mannonate dehydratase (352 aa).

This sequence belongs to the mannonate dehydratase family. Requires Fe(2+) as cofactor. Mn(2+) serves as cofactor.

It carries out the reaction D-mannonate = 2-dehydro-3-deoxy-D-gluconate + H2O. Its pathway is carbohydrate metabolism; pentose and glucuronate interconversion. Catalyzes the dehydration of D-mannonate. This Paraburkholderia phytofirmans (strain DSM 17436 / LMG 22146 / PsJN) (Burkholderia phytofirmans) protein is Mannonate dehydratase.